Reading from the N-terminus, the 323-residue chain is Acetyl-coenzyme A carboxylase carboxyl transferase subunit alpha (323 aa).

One can recognise a CoA carboxyltransferase C-terminal domain in the interval 39 to 293 (RLAGKSQQLT…KRSLAESLRQ (255 aa)).

This sequence belongs to the AccA family. Acetyl-CoA carboxylase is a heterohexamer composed of biotin carboxyl carrier protein (AccB), biotin carboxylase (AccC) and two subunits each of ACCase subunit alpha (AccA) and ACCase subunit beta (AccD).

The protein resides in the cytoplasm. It catalyses the reaction N(6)-carboxybiotinyl-L-lysyl-[protein] + acetyl-CoA = N(6)-biotinyl-L-lysyl-[protein] + malonyl-CoA. Its pathway is lipid metabolism; malonyl-CoA biosynthesis; malonyl-CoA from acetyl-CoA: step 1/1. Component of the acetyl coenzyme A carboxylase (ACC) complex. First, biotin carboxylase catalyzes the carboxylation of biotin on its carrier protein (BCCP) and then the CO(2) group is transferred by the carboxyltransferase to acetyl-CoA to form malonyl-CoA. The chain is Acetyl-coenzyme A carboxylase carboxyl transferase subunit alpha from Cupriavidus metallidurans (strain ATCC 43123 / DSM 2839 / NBRC 102507 / CH34) (Ralstonia metallidurans).